The primary structure comprises 210 residues: 2-dehydro-3-deoxy-phosphogluconate aldolase (210 aa).

Catalysis depends on glutamate 41, which acts as the Proton acceptor. 3 residues coordinate pyruvate: arginine 45, threonine 69, and lysine 129. Lysine 129 (schiff-base intermediate with substrate) is an active-site residue.

Belongs to the KHG/KDPG aldolase family. Homotrimer.

It is found in the cytoplasm. The enzyme catalyses 2-dehydro-3-deoxy-6-phospho-D-gluconate = D-glyceraldehyde 3-phosphate + pyruvate. It participates in carbohydrate acid metabolism; 2-dehydro-3-deoxy-D-gluconate degradation; D-glyceraldehyde 3-phosphate and pyruvate from 2-dehydro-3-deoxy-D-gluconate: step 2/2. Its function is as follows. Catalyzes the reversible, stereospecific retro-aldol cleavage of 2-keto-3-deoxy-6-phosphogluconate (KDPG) to pyruvate and D-glyceraldehyde-3-phosphate. In Treponema pallidum (strain Nichols), this protein is 2-dehydro-3-deoxy-phosphogluconate aldolase (eda).